The sequence spans 281 residues: Ribosomal RNA small subunit methyltransferase A (281 aa).

S-adenosyl-L-methionine is bound by residues asparagine 21, leucine 23, glycine 48, glutamate 69, aspartate 92, and asparagine 113.

Belongs to the class I-like SAM-binding methyltransferase superfamily. rRNA adenine N(6)-methyltransferase family. RsmA subfamily.

The protein localises to the cytoplasm. The catalysed reaction is adenosine(1518)/adenosine(1519) in 16S rRNA + 4 S-adenosyl-L-methionine = N(6)-dimethyladenosine(1518)/N(6)-dimethyladenosine(1519) in 16S rRNA + 4 S-adenosyl-L-homocysteine + 4 H(+). Its function is as follows. Specifically dimethylates two adjacent adenosines (A1518 and A1519) in the loop of a conserved hairpin near the 3'-end of 16S rRNA in the 30S particle. May play a critical role in biogenesis of 30S subunits. The polypeptide is Ribosomal RNA small subunit methyltransferase A (Ralstonia nicotianae (strain ATCC BAA-1114 / GMI1000) (Ralstonia solanacearum)).